Reading from the N-terminus, the 256-residue chain is DNA repair protein RecO (256 aa).

It belongs to the RecO family.

In terms of biological role, involved in DNA repair and RecF pathway recombination. The chain is DNA repair protein RecO from Nocardia farcinica (strain IFM 10152).